The sequence spans 439 residues: Probable serine/threonine-protein kinase WNK6 (439 aa).

The segment at 1–30 (MMPPKPAAEDVADEQPEPPDEDPDVAEADP) is disordered. Residues 10–27 (DVADEQPEPPDEDPDVAE) are compositionally biased toward acidic residues. The Protein kinase domain occupies 35 to 293 (LRYREIIGSG…ASELLKSPFL (259 aa)). ATP-binding positions include 116 to 119 (TELF) and lysine 166. Aspartate 183 acts as the Proton acceptor in catalysis.

Belongs to the protein kinase superfamily. Ser/Thr protein kinase family. WNK subfamily.

It catalyses the reaction L-seryl-[protein] + ATP = O-phospho-L-seryl-[protein] + ADP + H(+). The enzyme catalyses L-threonyl-[protein] + ATP = O-phospho-L-threonyl-[protein] + ADP + H(+). This is Probable serine/threonine-protein kinase WNK6 (WNK6) from Oryza sativa subsp. japonica (Rice).